The sequence spans 338 residues: Ketol-acid reductoisomerase (NADP(+)) (338 aa).

Residues 1-181 (MNVFYDKDAD…GGGRAGIIET (181 aa)) enclose the KARI N-terminal Rossmann domain. NADP(+)-binding positions include 24–27 (YGSQ), arginine 47, and serine 52. Histidine 107 is a catalytic residue. Glycine 133 lines the NADP(+) pocket. The KARI C-terminal knotted domain maps to 182-327 (NFREETETDL…AKLRAMMPWI (146 aa)). Mg(2+)-binding residues include aspartate 190, glutamate 194, glutamate 226, and glutamate 230. A substrate-binding site is contributed by serine 251.

The protein belongs to the ketol-acid reductoisomerase family. Mg(2+) is required as a cofactor.

It carries out the reaction (2R)-2,3-dihydroxy-3-methylbutanoate + NADP(+) = (2S)-2-acetolactate + NADPH + H(+). It catalyses the reaction (2R,3R)-2,3-dihydroxy-3-methylpentanoate + NADP(+) = (S)-2-ethyl-2-hydroxy-3-oxobutanoate + NADPH + H(+). It participates in amino-acid biosynthesis; L-isoleucine biosynthesis; L-isoleucine from 2-oxobutanoate: step 2/4. The protein operates within amino-acid biosynthesis; L-valine biosynthesis; L-valine from pyruvate: step 2/4. Functionally, involved in the biosynthesis of branched-chain amino acids (BCAA). Catalyzes an alkyl-migration followed by a ketol-acid reduction of (S)-2-acetolactate (S2AL) to yield (R)-2,3-dihydroxy-isovalerate. In the isomerase reaction, S2AL is rearranged via a Mg-dependent methyl migration to produce 3-hydroxy-3-methyl-2-ketobutyrate (HMKB). In the reductase reaction, this 2-ketoacid undergoes a metal-dependent reduction by NADPH to yield (R)-2,3-dihydroxy-isovalerate. The chain is Ketol-acid reductoisomerase (NADP(+)) from Burkholderia ambifaria (strain MC40-6).